Reading from the N-terminus, the 201-residue chain is Imidazole glycerol phosphate synthase subunit HisH 1 (201 aa).

Residues Met1–Leu201 form the Glutamine amidotransferase type-1 domain. Catalysis depends on Cys80, which acts as the Nucleophile. Active-site residues include His183 and Glu185.

As to quaternary structure, heterodimer of HisH and HisF.

It localises to the cytoplasm. It catalyses the reaction 5-[(5-phospho-1-deoxy-D-ribulos-1-ylimino)methylamino]-1-(5-phospho-beta-D-ribosyl)imidazole-4-carboxamide + L-glutamine = D-erythro-1-(imidazol-4-yl)glycerol 3-phosphate + 5-amino-1-(5-phospho-beta-D-ribosyl)imidazole-4-carboxamide + L-glutamate + H(+). The catalysed reaction is L-glutamine + H2O = L-glutamate + NH4(+). It participates in amino-acid biosynthesis; L-histidine biosynthesis; L-histidine from 5-phospho-alpha-D-ribose 1-diphosphate: step 5/9. IGPS catalyzes the conversion of PRFAR and glutamine to IGP, AICAR and glutamate. The HisH subunit provides the glutamine amidotransferase activity that produces the ammonia necessary to HisF for the synthesis of IGP and AICAR. In Campylobacter jejuni (strain RM1221), this protein is Imidazole glycerol phosphate synthase subunit HisH 1.